The sequence spans 365 residues: Holliday junction branch migration complex subunit RuvB (365 aa).

Residues methionine 1–tyrosine 191 are large ATPase domain (RuvB-L). ATP is bound by residues leucine 30, arginine 31, glycine 72, lysine 75, threonine 76, serine 77, glutamate 138–phenylalanine 140, arginine 181, tyrosine 191, and arginine 228. Threonine 76 lines the Mg(2+) pocket. Residues glutamate 192–aspartate 262 are small ATPAse domain (RuvB-S). The head domain (RuvB-H) stretch occupies residues glutamine 265–glutamate 365. DNA is bound by residues arginine 320 and arginine 325.

The protein belongs to the RuvB family. In terms of assembly, homohexamer. Forms an RuvA(8)-RuvB(12)-Holliday junction (HJ) complex. HJ DNA is sandwiched between 2 RuvA tetramers; dsDNA enters through RuvA and exits via RuvB. An RuvB hexamer assembles on each DNA strand where it exits the tetramer. Each RuvB hexamer is contacted by two RuvA subunits (via domain III) on 2 adjacent RuvB subunits; this complex drives branch migration. In the full resolvosome a probable DNA-RuvA(4)-RuvB(12)-RuvC(2) complex forms which resolves the HJ.

Its subcellular location is the cytoplasm. It catalyses the reaction ATP + H2O = ADP + phosphate + H(+). In terms of biological role, the RuvA-RuvB-RuvC complex processes Holliday junction (HJ) DNA during genetic recombination and DNA repair, while the RuvA-RuvB complex plays an important role in the rescue of blocked DNA replication forks via replication fork reversal (RFR). RuvA specifically binds to HJ cruciform DNA, conferring on it an open structure. The RuvB hexamer acts as an ATP-dependent pump, pulling dsDNA into and through the RuvAB complex. RuvB forms 2 homohexamers on either side of HJ DNA bound by 1 or 2 RuvA tetramers; 4 subunits per hexamer contact DNA at a time. Coordinated motions by a converter formed by DNA-disengaged RuvB subunits stimulates ATP hydrolysis and nucleotide exchange. Immobilization of the converter enables RuvB to convert the ATP-contained energy into a lever motion, pulling 2 nucleotides of DNA out of the RuvA tetramer per ATP hydrolyzed, thus driving DNA branch migration. The RuvB motors rotate together with the DNA substrate, which together with the progressing nucleotide cycle form the mechanistic basis for DNA recombination by continuous HJ branch migration. Branch migration allows RuvC to scan DNA until it finds its consensus sequence, where it cleaves and resolves cruciform DNA. The polypeptide is Holliday junction branch migration complex subunit RuvB (Rhodococcus erythropolis (strain PR4 / NBRC 100887)).